The chain runs to 880 residues: MQPGATTCTEDRIQHALERCLHGLSLSRRSTSWSAGLCLNCWSLQELVSRDPGHFLILLEQILQKTREVQEKGTYDLLTPLALLFYSTVLCTPHFPPDSDLLLKAASTYHRFLTWPVPYCSICQELLTFIDAELKAPGISYQRLVRAEQGLPIRSHRSSTVTVLLLNPVEVQAEFLAVANKLSTPGHSPHSAYTTLLLHAFQATFGAHCDVPGLHCRLQAKTLAELEDIFTETAEAQELASGIGDAAEARRWLRTKLQAVGEKAGFPGVLDTAKPGKLHTIPIPVARCYTYSWSQDSFDILQEILLKEQELLQPGILGDDEEEEEEEEEVEEDLETDGHCAERDSLLSTSSLASHDSTLSLASSQASGPALSRHLLTSFVSGLSDGMDSGYVEDSEESSSEWPWRRGSQERRGHRRPGQKFIRIYKLFKSTSQLVLRRDSRSLEGSSDTALPLRRAGSLCSPLDEPVSPPSRAQRSRSLPQPKLGTQLPSWLLAPASRPQRRRPFLSGDEDPKASTLRVVVFGSDRISGKVARAYSNLRRLENNRPLLTRFFKLQFFYVPVKRSHGTSPGACPPPRSQTPSPPTDSPRHASPGELGTTPWEESTNDISHYLGMLDPWYERNVLGLMHLPPEVLCQQSLKAEAQALEGSPTQLPILADMLLYYCRFAARPVLLQVYQTELTFITGEKTTEIFIHSLELGHSAATRAIKASGPGSKRLGIDGDREAVPLTLQIIYSKGAISGRSRWSNLEKVCTSVNLNKACRKQEELDSSMEALTLNLTEVVKRQNSKSKKGFNQISTSQIKVDKVQIIGSNSCPFAVCLDQDERKILQSVVRCEVSPCYKPEKSDLSSPPQTPPDLPAQAAPDLCSLLCLPIMTFSGALP.

Met1 bears the N-acetylmethionine mark. Positions Ser25–Leu101 are heterodimerization. Disordered stretches follow at residues Gly315–His339, Ser389–Arg416, Arg454–Glu510, and His565–Glu601. Residues Gly318–Glu335 show a composition bias toward acidic residues. 2 positions are modified to phosphoserine: Ser458 and Ser507. A compositionally biased stretch (pro residues) spans Ala571–Asp585. The segment at Pro653–Ser753 is interaction with beta-gamma G protein dimers.

Heterodimer of a catalytic subunit (PIK3CG/p120) and a regulatory (PIK3R5a/p101) subunit. Interacts with beta-gamma G protein dimers. In terms of tissue distribution, ubiquitously expressed with high expression in fetal brain compared to adult brain. Abundant expression is observed in cerebellum, cerebral cortex, cerebral meninges, and vermis cerebelli.

Its subcellular location is the nucleus. It is found in the cytoplasm. The protein localises to the cell membrane. Greatly activated by G gamma proteins. Functionally, regulatory subunit of the PI3K gamma complex. Required for recruitment of the catalytic subunit to the plasma membrane via interaction with beta-gamma G protein dimers. Required for G protein-mediated activation of PIK3CG. The polypeptide is Phosphoinositide 3-kinase regulatory subunit 5 (PIK3R5) (Homo sapiens (Human)).